The chain runs to 61 residues: Arabinogalactan protein 15 (61 aa).

Residues Met1 to Ala22 form the signal peptide. Position 23 is a pyrrolidone carboxylic acid (Gln23). Residues Pro27, Pro29, and Pro31 each carry the 4-hydroxyproline modification. Pro27, Pro29, and Pro31 each carry an O-linked (Ara...) hydroxyproline glycan. A lipid anchor (GPI-anchor amidated serine) is attached at Ser35. The propeptide at Ser36–Ile61 is removed in mature form.

The protein belongs to the AG-peptide AGP family. In terms of processing, contains 4-hydroxyproline; hydroxylated on Pro-27, Pro-29 and Pro-31. O-glycosylated on hydroxyprolines; noncontiguous hydroxylproline residues are glycosylated with arabinogalactan. As to expression, expressed in reproductive tissues. Expressed in chalaza, funiculus, stigma, septum, style, integument and transmitting tract.

The protein resides in the cell membrane. In terms of biological role, proteoglycan that seems to be implicated in diverse developmental roles such as differentiation, cell-cell recognition, embryogenesis and programmed cell death. In Arabidopsis thaliana (Mouse-ear cress), this protein is Arabinogalactan protein 15.